The following is a 212-amino-acid chain: High frequency lysogenization protein HflD homolog (212 aa).

The protein belongs to the HflD family.

The protein resides in the cytoplasm. The protein localises to the cell inner membrane. The chain is High frequency lysogenization protein HflD homolog from Pectobacterium carotovorum subsp. carotovorum (strain PC1).